Reading from the N-terminus, the 578-residue chain is MLTETRPRDVQVAEIAPGVLVLRSRTWDRLKFEVEYGRQQGTTSNSYLIQAPQPALLDPPGESFTQIYLQELQRHIDLNQLRYLILSHVNSNRLATVKVLLEKAPQITLVCSKAGAVTLRSAIGEQLHLWIARADTPLELGGDRQLMFIAAATPRWPDGLITVDPQNQIVFSDKLFGAHVCGDSLYDEQWKKLDEDRAYYFECLHAAQTRQVESILDRLAELTPPPRLYAPAHGPIVKFSRSRLFQDYRDWCQAQAEQETKVALFYASAYGNTAILANAIAQGLTAAGVQVEAVNCETTPPAEMQALIHSSDGFIIGSPTLGGHMPTQVQTALGFILAEGSQTKLAGVFGSYGWSGEAIDDIEQKLLDAGYTLGFETLRVKFTPTATDLEKCQIAANEFAQALKKLRKSRTVRPSSLAEAQVDRTEQAVNRVVGSLCVLTTLPEGCFHLTQAAAILVSSVSQASFNPPGITVSLPQEWAESLCLVGDRFVLNILKEGSPLVRQFQQAQRLGEQQLATLGLKSAESGAPILLDALAYLECTVESRMNCGNHWLIYAVVESGELLQTSGLTAIQHRKTSS.

A zinc metallo-hydrolase region spans residues 39–233; it reads QQGTTSNSYL…PPPRLYAPAH (195 aa). One can recognise a Flavodoxin-like domain in the interval 262 to 404; that stretch reads VALFYASAYG…AANEFAQALK (143 aa). The interval 429-578 is flavodoxin-reductase-like; it reads VNRVVGSLCV…TAIQHRKTSS (150 aa).

It in the N-terminal section; belongs to the zinc metallo-hydrolase group 3 family. The protein in the C-terminal section; belongs to the flavodoxin reductase family. The cofactor is Fe cation.

In terms of biological role, mediates electron transfer from NADH to oxygen, reducing it to water. This modular protein has 3 redox cofactors, in other organisms the same activity requires 2 or 3 proteins. The chain is Putative diflavin flavoprotein A 2 (dfa2) from Thermosynechococcus vestitus (strain NIES-2133 / IAM M-273 / BP-1).